The following is a 635-amino-acid chain: Histone-lysine N-methyltransferase Su(var)3-9 (635 aa).

Residues 81 to 188 (ERLSEKKIKN…LNGFAKLKRR (108 aa)) form a binds to Su(var)205 and Suvar(3)7 region. Disordered regions lie at residues 123-161 (RLCT…NSSG) and 191-210 (SCVG…MGVI). Composition is skewed to low complexity over residues 128 to 139 (PASSSMPASTSS) and 147 to 161 (RSTS…NSSG). Residues 219 to 278 (YVVERIECVEMDQYQPVFFVKWLGYHDSENTWESLANVADCAEMEKFVERHQQLYETYIA) enclose the Chromo domain. The Pre-SET domain maps to 410–474 (VGCKCTEDTE…SCSNRLVQHG (65 aa)). Zn(2+) is bound by residues C412, C414, C421, C427, C428, C456, C460, C462, and C466. The region spanning 477-603 (VPLVLFKTAN…AGEELSFDYI (127 aa)) is the SET domain. S-adenosyl-L-methionine-binding positions include 488 to 490 (SGW), Y531, and 560 to 561 (NH). Positions 563, 623, 625, and 630 each coordinate Zn(2+). Residues 619-635 (VRVECRCGRDNCRKVLF) form the Post-SET domain.

Belongs to the class V-like SAM-binding methyltransferase superfamily. Histone-lysine methyltransferase family. Suvar3-9 subfamily. Interacts with Su(var)205 and Su(var)3-7. Probably associates with HDAC1/Rpd3. Interacts with Rrp6; the interaction promotes association of Rrp6 with a subset of genomic loci.

It localises to the nucleus. Its subcellular location is the chromosome. The protein localises to the centromere. It carries out the reaction L-lysyl(9)-[histone H3] + 3 S-adenosyl-L-methionine = N(6),N(6),N(6)-trimethyl-L-lysyl(9)-[histone H3] + 3 S-adenosyl-L-homocysteine + 3 H(+). Its function is as follows. Histone methyltransferase that specifically trimethylates 'Lys-9' of histone H3 using monomethylated H3 'Lys-9' as substrate. H3 'Lys-9' trimethylation represents a specific tag for epigenetic transcriptional repression by recruiting Su(var)205/HP1 to methylated histones. Mainly functions in heterochromatin regions, thereby playing a central role in the establishment of constitutive heterochromatin at pericentric regions. Involved in heterochromatic gene silencing including the modification of position-effect-variegation. The protein is Histone-lysine N-methyltransferase Su(var)3-9 (Su(var)3-9) of Drosophila melanogaster (Fruit fly).